We begin with the raw amino-acid sequence, 423 residues long: D-tagatose-1,6-bisphosphate aldolase subunit GatZ (423 aa).

It belongs to the GatZ/KbaZ family. GatZ subfamily. As to quaternary structure, forms a complex with GatY.

It functions in the pathway carbohydrate metabolism; D-tagatose 6-phosphate degradation; D-glyceraldehyde 3-phosphate and glycerone phosphate from D-tagatose 6-phosphate: step 2/2. Functionally, component of the tagatose-1,6-bisphosphate aldolase GatYZ that is required for full activity and stability of the Y subunit. Could have a chaperone-like function for the proper and stable folding of GatY. When expressed alone, GatZ does not show any aldolase activity. Is involved in the catabolism of galactitol. The protein is D-tagatose-1,6-bisphosphate aldolase subunit GatZ of Salmonella heidelberg (strain SL476).